The chain runs to 175 residues: Adenine phosphoribosyltransferase (175 aa).

This sequence belongs to the purine/pyrimidine phosphoribosyltransferase family. In terms of assembly, homodimer.

Its subcellular location is the cytoplasm. It carries out the reaction AMP + diphosphate = 5-phospho-alpha-D-ribose 1-diphosphate + adenine. It participates in purine metabolism; AMP biosynthesis via salvage pathway; AMP from adenine: step 1/1. Functionally, catalyzes a salvage reaction resulting in the formation of AMP, that is energically less costly than de novo synthesis. This chain is Adenine phosphoribosyltransferase, found in Francisella tularensis subsp. tularensis (strain FSC 198).